The following is a 191-amino-acid chain: Probable molybdenum cofactor guanylyltransferase (191 aa).

GTP contacts are provided by residues 6-8 (LAG), Lys18, Asp67, and Asp92. Asp92 contributes to the Mg(2+) binding site.

Belongs to the MobA family. Mg(2+) serves as cofactor.

The protein localises to the cytoplasm. It catalyses the reaction Mo-molybdopterin + GTP + H(+) = Mo-molybdopterin guanine dinucleotide + diphosphate. Functionally, transfers a GMP moiety from GTP to Mo-molybdopterin (Mo-MPT) cofactor (Moco or molybdenum cofactor) to form Mo-molybdopterin guanine dinucleotide (Mo-MGD) cofactor. This chain is Probable molybdenum cofactor guanylyltransferase, found in Thermococcus gammatolerans (strain DSM 15229 / JCM 11827 / EJ3).